Consider the following 391-residue polypeptide: Pyruvate dehydrogenase E1 component subunit beta-3, chloroplastic (391 aa).

The N-terminal 35 residues, 1–35, are a transit peptide targeting the chloroplast; it reads MATAAAASLQYALHGAASASAKPRSAAPGRSVRVV. Glutamate 127 is a thiamine diphosphate binding site. Isoleucine 180, alanine 228, isoleucine 229, and asparagine 233 together coordinate K(+).

Tetramer of 2 alpha and 2 beta subunits. The cofactor is thiamine diphosphate.

The protein resides in the plastid. It is found in the chloroplast. It carries out the reaction N(6)-[(R)-lipoyl]-L-lysyl-[protein] + pyruvate + H(+) = N(6)-[(R)-S(8)-acetyldihydrolipoyl]-L-lysyl-[protein] + CO2. Functionally, the pyruvate dehydrogenase complex catalyzes the overall conversion of pyruvate to acetyl-CoA and CO(2). It contains multiple copies of three enzymatic components: pyruvate dehydrogenase (E1), dihydrolipoamide acetyltransferase (E2) and lipoamide dehydrogenase (E3). The chain is Pyruvate dehydrogenase E1 component subunit beta-3, chloroplastic from Oryza sativa subsp. japonica (Rice).